A 305-amino-acid chain; its full sequence is UDP-3-O-acyl-N-acetylglucosamine deacetylase (305 aa).

3 residues coordinate Zn(2+): histidine 79, histidine 238, and aspartate 242. Residue histidine 265 is the Proton donor of the active site.

This sequence belongs to the LpxC family. The cofactor is Zn(2+).

It carries out the reaction a UDP-3-O-[(3R)-3-hydroxyacyl]-N-acetyl-alpha-D-glucosamine + H2O = a UDP-3-O-[(3R)-3-hydroxyacyl]-alpha-D-glucosamine + acetate. The protein operates within glycolipid biosynthesis; lipid IV(A) biosynthesis; lipid IV(A) from (3R)-3-hydroxytetradecanoyl-[acyl-carrier-protein] and UDP-N-acetyl-alpha-D-glucosamine: step 2/6. Its function is as follows. Catalyzes the hydrolysis of UDP-3-O-myristoyl-N-acetylglucosamine to form UDP-3-O-myristoylglucosamine and acetate, the committed step in lipid A biosynthesis. The chain is UDP-3-O-acyl-N-acetylglucosamine deacetylase from Haemophilus influenzae (strain PittEE).